A 147-amino-acid chain; its full sequence is MNWTTATCWALLLATAFLCDSCSAKGGRGGARGSARGVRGGARGASRVRVRPAPRYSSSLRVAAAGAAAGAAAGVAAGLATGSGWRRTSGPGELGLEDDENGAMGGNGTDRGVYSYWAWTSGSGSVHSPRICLLLSGTLGALELLRP.

A signal peptide spans 1–24; that stretch reads MNWTTATCWALLLATAFLCDSCSA. The span at 26–43 shows a compositional bias: gly residues; it reads GGRGGARGSARGVRGGAR. Residues 26-46 are disordered; it reads GGRGGARGSARGVRGGARGAS. N-linked (GlcNAc...) asparagine glycosylation is present at Asn-107. Residue Gly-122 is the site of GPI-anchor amidated glycine attachment. A propeptide spans 123–147 (removed in mature form); the sequence is SGSVHSPRICLLLSGTLGALELLRP.

It belongs to the SPRN family. Post-translationally, N-glycosylated. Almost exclusively expressed in brain, with weak expression in lung and stomach.

Its subcellular location is the cell membrane. Its function is as follows. Prion-like protein that has PrP(C)-like neuroprotective activity. May act as a modulator for the biological actions of normal and abnormal PrP. This is Shadow of prion protein (Sprn) from Rattus norvegicus (Rat).